Here is a 607-residue protein sequence, read N- to C-terminus: UvrABC system protein C (607 aa).

Residues 16-94 (HLPGVYRHLD…IKSLRPRYNI (79 aa)) enclose the GIY-YIG domain. The UVR domain occupies 203–238 (REVMDEIEARMQQASGELRFEEAAVLRDQMGSLSKV).

Belongs to the UvrC family. Interacts with UvrB in an incision complex.

Its subcellular location is the cytoplasm. Functionally, the UvrABC repair system catalyzes the recognition and processing of DNA lesions. UvrC both incises the 5' and 3' sides of the lesion. The N-terminal half is responsible for the 3' incision and the C-terminal half is responsible for the 5' incision. This Bordetella avium (strain 197N) protein is UvrABC system protein C.